The following is a 130-amino-acid chain: Phosphomevalonate dehydratase small subunit (130 aa).

The Proton acceptor role is filled by serine 62.

This sequence belongs to the AcnX type II small subunit family. In terms of assembly, heterodimer composed of a large subunit (PMDh-L) and a small subunit (PMDh-S).

The enzyme catalyses (R)-5-phosphomevalonate = (2E)-3-methyl-5-phosphooxypent-2-enoate + H2O. It participates in isoprenoid biosynthesis; isopentenyl diphosphate biosynthesis via mevalonate pathway. Component of a hydro-lyase that catalyzes the dehydration of mevalonate 5-phosphate (MVA5P) to form trans-anhydromevalonate 5-phosphate (tAHMP). Involved in the archaeal mevalonate (MVA) pathway, which provides fundamental precursors for isoprenoid biosynthesis, such as isopentenyl diphosphate (IPP) and dimethylallyl diphosphate (DMAPP). In Thermococcus onnurineus (strain NA1), this protein is Phosphomevalonate dehydratase small subunit.